We begin with the raw amino-acid sequence, 146 residues long: Snaclec rhodocytin subunit beta (146 aa).

The N-terminal stretch at 1–23 is a signal peptide; the sequence is MGRFIFVSFGLLVVFLSLSGTGA. Intrachain disulfides connect Cys25/Cys36, Cys53/Cys142, and Cys119/Cys134. One can recognise a C-type lectin domain in the interval 32 to 143; sequence YEGHCYKPFN…CSSTCSFVCK (112 aa).

Belongs to the snaclec family. Dimer (non-covalently linked) of heterodimers of subunits alpha and beta (disulfide-linked). As to expression, expressed by the venom gland.

It localises to the secreted. In terms of biological role, elicits platelet aggregation by the binding to the C-type lectin domain family 1 member B (CLEC1B/CLEC2). Binding leads to tyrosine phosphorylation in the cytoplasmic tail of CLEC1B, which promotes the binding of spleen tyrosine kinase (Syk), subsequent activation of PLCgamma2, and platelet activation and aggregation. Binding to GPIbalpha (GP1BA) and alpha2/beta-1 (ITGA2/ITGB1) may also induce aggregation, but this is controversial. In Calloselasma rhodostoma (Malayan pit viper), this protein is Snaclec rhodocytin subunit beta.